Here is a 489-residue protein sequence, read N- to C-terminus: Acetyl-coenzyme A carboxylase carboxyl transferase subunit beta, chloroplastic (489 aa).

The CoA carboxyltransferase N-terminal domain occupies L222–K489. The Zn(2+) site is built by C226, C229, C245, and C248. The C4-type zinc-finger motif lies at C226 to C248.

This sequence belongs to the AccD/PCCB family. Acetyl-CoA carboxylase is a heterohexamer composed of biotin carboxyl carrier protein, biotin carboxylase and 2 subunits each of ACCase subunit alpha and ACCase plastid-coded subunit beta (accD). It depends on Zn(2+) as a cofactor.

The protein resides in the plastid. Its subcellular location is the chloroplast stroma. The catalysed reaction is N(6)-carboxybiotinyl-L-lysyl-[protein] + acetyl-CoA = N(6)-biotinyl-L-lysyl-[protein] + malonyl-CoA. It participates in lipid metabolism; malonyl-CoA biosynthesis; malonyl-CoA from acetyl-CoA: step 1/1. Its function is as follows. Component of the acetyl coenzyme A carboxylase (ACC) complex. Biotin carboxylase (BC) catalyzes the carboxylation of biotin on its carrier protein (BCCP) and then the CO(2) group is transferred by the transcarboxylase to acetyl-CoA to form malonyl-CoA. The polypeptide is Acetyl-coenzyme A carboxylase carboxyl transferase subunit beta, chloroplastic (Buxus microphylla (Littleleaf boxwood)).